A 134-amino-acid polypeptide reads, in one-letter code: Small ribosomal subunit protein uS8 (134 aa).

It belongs to the universal ribosomal protein uS8 family. Part of the 30S ribosomal subunit. Contacts proteins S5 and S12.

One of the primary rRNA binding proteins, it binds directly to 16S rRNA central domain where it helps coordinate assembly of the platform of the 30S subunit. The chain is Small ribosomal subunit protein uS8 from Thermotoga sp. (strain RQ2).